The sequence spans 89 residues: Small ribosomal subunit protein uS15 (89 aa).

This sequence belongs to the universal ribosomal protein uS15 family. Part of the 30S ribosomal subunit. Forms a bridge to the 50S subunit in the 70S ribosome, contacting the 23S rRNA.

One of the primary rRNA binding proteins, it binds directly to 16S rRNA where it helps nucleate assembly of the platform of the 30S subunit by binding and bridging several RNA helices of the 16S rRNA. Functionally, forms an intersubunit bridge (bridge B4) with the 23S rRNA of the 50S subunit in the ribosome. This is Small ribosomal subunit protein uS15 from Paenarthrobacter aurescens (strain TC1).